The chain runs to 342 residues: AM-toxin biosynthesis protein 12 (342 aa).

Positions 1 to 20 (MSLLITSLAWGALLDPEVSS) are cleaved as a signal peptide.

It participates in mycotoxin biosynthesis. In terms of biological role, part of the gene clusters that mediate the biosynthesis of AM-toxins, host-selective toxins (HSTs) causing Alternaria blotch on apple, a worldwide distributed disease. AM-toxins are cyclic depsipeptides containing the 3 residues 2-hydroxy-isovaleric acid (2-HIV), dehydroalanine, L-alanine which are common for all 3 AM-toxins I to III. The fourth precursor is L-alpha-amino-methoxyphenyl-valeric acid (L-Amv) for AM-toxin I, L-alpha-amino-phenyl-valeric acid (L-Apv) for AM-toxin II, and L-alpha-amino-hydroxyphenyl-valeric acid (L-Ahv) for AM-toxin III. AM-toxins have two target sites for affecting susceptible apple cells; they cause invagination of the plasma membrane and electrolyte loss and chloroplast disorganization. The non-ribosomal peptide synthetase AMT1 contains 4 catalytic modules and is responsible for activation of each residue in AM-toxin. The aldo-keto reductase AMT2 catalyzes the conversion of 2-keto-isovaleric acid (2-KIV) to 2-hydroxy-isovaleric acid (2-HIV), one of the precursor residues incorporated by AMT1 during AM-toxin biosynthesis, by reduction of its ketone to an alcohol. The cytochrome P450 monooxygenase AMT3 and the thioesterase AMT4 are also important for AM-toxin production, but their exact function within the AM-toxin biosynthesis are not known yet. Up to 21 proteins (including AMT1 to AMT4) are predicted to be involved in AM-toxin biosynthesis since their expression ishighly up-regulated in AM-toxin-producing cultures. In Alternaria alternata (Alternaria rot fungus), this protein is AM-toxin biosynthesis protein 12.